Here is a 196-residue protein sequence, read N- to C-terminus: Small ribosomal subunit protein uS4c (196 aa).

The S4 RNA-binding domain maps to 82 to 143; sequence MRLDNILFRL…KQKSKALIQN (62 aa).

It belongs to the universal ribosomal protein uS4 family. Part of the 30S ribosomal subunit. Contacts protein S5. The interaction surface between S4 and S5 is involved in control of translational fidelity.

It is found in the plastid. Its subcellular location is the chloroplast. Functionally, one of the primary rRNA binding proteins, it binds directly to 16S rRNA where it nucleates assembly of the body of the 30S subunit. With S5 and S12 plays an important role in translational accuracy. In Patersonia sp. (strain Lejeune 1997), this protein is Small ribosomal subunit protein uS4c (rps4).